Reading from the N-terminus, the 633-residue chain is Chaperone protein DnaK (633 aa).

Residue threonine 198 is modified to Phosphothreonine; by autocatalysis. A disordered region spans residues 599 to 633; sequence QQASQETPGDGDAGAAGAKKKDDDDVVDADYEEVK. Over residues 622-633 the composition is skewed to acidic residues; the sequence is DDVVDADYEEVK.

This sequence belongs to the heat shock protein 70 family.

Functionally, acts as a chaperone. This Desulfotalea psychrophila (strain LSv54 / DSM 12343) protein is Chaperone protein DnaK.